The following is a 217-amino-acid chain: Transmembrane protein 253 (217 aa).

Helical transmembrane passes span 33 to 53 (LVLAVSQLWLAVVVVPLAVSV), 62 to 82 (MATALPLGPGASGLLTGTVTL), 96 to 116 (MMIFNTFNLILGFIVVVVEVM), and 138 to 158 (LSAEAFTLGGVLVSVHALFLL). Positions 187–217 (PGLENGPTVASTGANERVGQREQTRAALLPP) are disordered.

It is found in the membrane. The polypeptide is Transmembrane protein 253 (TMEM253) (Homo sapiens (Human)).